The chain runs to 203 residues: Putative phosphoserine phosphatase 2 (203 aa).

The Tele-phosphohistidine intermediate role is filled by His-9. Residue His-149 is part of the active site.

This sequence belongs to the histidine phosphatase superfamily. Metal-independent phosphoserine phosphatase family. As to quaternary structure, heterodimer with PspA. The PspB subunit appears to have no or considerably lower PSP activity compared with that of PspA.

It carries out the reaction O-phospho-L-serine + H2O = L-serine + phosphate. The catalysed reaction is O-phospho-D-serine + H2O = D-serine + phosphate. It functions in the pathway amino-acid biosynthesis; L-serine biosynthesis; L-serine from 3-phospho-D-glycerate: step 3/3. With respect to regulation, activity is not inhibited by EDTA in vitro, nor enhanced by the addition of Mg(2+). Its function is as follows. Part of a complex that catalyzes the dephosphorylation of L-phosphoserine to serine and inorganic phosphate. Is poorly or not active toward D-phosphoserine, DL-phosphothreonine, 3-phosphoglycerate, para-nitrophenylphosphate, and fructose-6-phosphate. Does not display phosphoglycerate mutase activity. The chain is Putative phosphoserine phosphatase 2 (pspB) from Hydrogenobacter thermophilus (strain DSM 6534 / IAM 12695 / TK-6).